The primary structure comprises 547 residues: Phenylalanine--tRNA ligase beta subunit (547 aa).

The B5 domain occupies 269–344 (LDVRFMEVDV…IGYGYENITP (76 aa)). Mg(2+)-binding residues include Asp322, Asp328, Glu331, and Asp332.

The protein belongs to the phenylalanyl-tRNA synthetase beta subunit family. Type 2 subfamily. As to quaternary structure, tetramer of two alpha and two beta subunits. Mg(2+) serves as cofactor.

Its subcellular location is the cytoplasm. It carries out the reaction tRNA(Phe) + L-phenylalanine + ATP = L-phenylalanyl-tRNA(Phe) + AMP + diphosphate + H(+). In Archaeoglobus fulgidus (strain ATCC 49558 / DSM 4304 / JCM 9628 / NBRC 100126 / VC-16), this protein is Phenylalanine--tRNA ligase beta subunit.